A 192-amino-acid polypeptide reads, in one-letter code: Ribose 1,5-bisphosphate phosphokinase PhnN (192 aa).

15-22 is a binding site for ATP; it reads GPSGAGKD.

It belongs to the ribose 1,5-bisphosphokinase family.

The catalysed reaction is alpha-D-ribose 1,5-bisphosphate + ATP = 5-phospho-alpha-D-ribose 1-diphosphate + ADP. It functions in the pathway metabolic intermediate biosynthesis; 5-phospho-alpha-D-ribose 1-diphosphate biosynthesis; 5-phospho-alpha-D-ribose 1-diphosphate from D-ribose 5-phosphate (route II): step 3/3. Catalyzes the phosphorylation of ribose 1,5-bisphosphate to 5-phospho-D-ribosyl alpha-1-diphosphate (PRPP). The chain is Ribose 1,5-bisphosphate phosphokinase PhnN from Brucella melitensis biotype 2 (strain ATCC 23457).